A 113-amino-acid polypeptide reads, in one-letter code: Iron-sulfur cluster insertion protein ErpA (113 aa).

Residues Cys41, Cys105, and Cys107 each coordinate iron-sulfur cluster.

This sequence belongs to the HesB/IscA family. Homodimer. The cofactor is iron-sulfur cluster.

Functionally, required for insertion of 4Fe-4S clusters for at least IspG. The polypeptide is Iron-sulfur cluster insertion protein ErpA (Actinobacillus pleuropneumoniae serotype 5b (strain L20)).